The primary structure comprises 355 residues: Neurogenic differentiation factor 1 (355 aa).

Residues 1 to 93 (MTKSYSESGL…GPKKKKMTKA (93 aa)) are disordered. Acidic residues predominate over residues 58-77 (DEEDEDEDLEEEDEEEEEDD). A compositionally biased stretch (basic residues) spans 80 to 92 (PKRRGPKKKKMTK). Residues 86–92 (KKKKMTK) carry the Nuclear localization signal motif. Residues 100 to 152 (LRRMKANARERNRMHGLNAALDNLRKVVPCYSKTQKLSKIETLRLAKNYIWAL) enclose the bHLH domain. Phosphoserine is present on residues Ser-161, Ser-258, Ser-265, and Ser-273. Ser-334 is subject to Phosphoserine; by CaMK2.

Efficient DNA-binding requires dimerization with another bHLH protein. Heterodimer with TCF3/E47; the heterodimer is inhibited in presence of ID2, but not NR0B2, to E-box element. Interacts with EP300; the interaction is inhibited by NR0B2. Interacts with RREB1. Interacts with ATOH8. Post-translationally, phosphorylated. In islet cells, phosphorylated on Ser-273 upon glucose stimulation; which may be required for nuclear localization. In activated neurons, phosphorylated on Ser-334; which promotes dendritic growth. Phosphorylated by MAPK1; phosphorylation regulates heterodimerization and DNA-binding activities. Phosphorylation on Ser-265 and Ser-273 increases transactivation on the insulin promoter in glucose-stimulated insulinoma cells. In terms of tissue distribution, most abundant in pancreatic alpha- and beta-cells, less in brain and intestine.

It localises to the cytoplasm. Its subcellular location is the nucleus. Acts as a transcriptional activator: mediates transcriptional activation by binding to E box-containing promoter consensus core sequences 5'-CANNTG-3'. Associates with the p300/CBP transcription coactivator complex to stimulate transcription of the secretin gene as well as the gene encoding the cyclin-dependent kinase inhibitor CDKN1A. Contributes to the regulation of several cell differentiation pathways, like those that promote the formation of early retinal ganglion cells, inner ear sensory neurons, granule cells forming either the cerebellum or the dentate gyrus cell layer of the hippocampus, endocrine islet cells of the pancreas and enteroendocrine cells of the small intestine. Together with PAX6 or SIX3, is required for the regulation of amacrine cell fate specification. Also required for dendrite morphogenesis and maintenance in the cerebellar cortex. Associates with chromatin to enhancer regulatory elements in genes encoding key transcriptional regulators of neurogenesis. This is Neurogenic differentiation factor 1 (NEUROD1) from Mesocricetus auratus (Golden hamster).